The primary structure comprises 797 residues: G-type lectin S-receptor-like serine/threonine-protein kinase SD2-2 (797 aa).

The first 23 residues, Met-1 to Ser-23, serve as a signal peptide directing secretion. Residues Lys-24–Asp-139 enclose the Bulb-type lectin domain. The Extracellular segment spans residues Lys-24–Ser-401. Asn-30, Asn-49, Asn-150, and Asn-197 each carry an N-linked (GlcNAc...) asparagine glycan. One can recognise an EGF-like; atypical domain in the interval Pro-274–Ala-310. 4 cysteine pairs are disulfide-bonded: Cys-278-Cys-290, Cys-284-Cys-298, Cys-359-Cys-381, and Cys-363-Cys-369. One can recognise a PAN domain in the interval Cys-321–Ser-407. N-linked (GlcNAc...) asparagine glycans are attached at residues Asn-366 and Asn-397. The chain crosses the membrane as a helical span at residues Ile-402–Pro-422. The Cytoplasmic segment spans residues Leu-423–Pro-797. Positions Asn-461 to Val-742 constitute a Protein kinase domain. Residues Val-467–Val-475 and Lys-490 each bind ATP. The tract at residues Ser-550 to Thr-566 is caM-binding. Residue Asp-585 is the Proton acceptor of the active site. Residues Gly-767–Pro-797 form a disordered region. Over residues Ser-784–Pro-797 the composition is skewed to low complexity.

It belongs to the protein kinase superfamily. Ser/Thr protein kinase family. Autophosphorylated. In terms of tissue distribution, expressed in the shoot apex and roots, specifically in lateral roots and at the root-hypocotyl transition zone.

The protein localises to the cell membrane. The catalysed reaction is L-seryl-[protein] + ATP = O-phospho-L-seryl-[protein] + ADP + H(+). The enzyme catalyses L-threonyl-[protein] + ATP = O-phospho-L-threonyl-[protein] + ADP + H(+). Its function is as follows. Serine/threonine-protein kinase. This chain is G-type lectin S-receptor-like serine/threonine-protein kinase SD2-2 (SD22), found in Arabidopsis thaliana (Mouse-ear cress).